Reading from the N-terminus, the 280-residue chain is ESX-1 secretion-associated protein EspJ (280 aa).

A Phosphoserine modification is found at Ser70. Composition is skewed to low complexity over residues 167 to 181 and 246 to 280; these read QTISQTAQQAAQSAQ and PAQAMDTGAGARPAASPLAAPVDPSTPAPSTTTTL. Residues 167–280 form a disordered region; the sequence is QTISQTAQQA…TPAPSTTTTL (114 aa).

Phosphorylated at Ser-70.

The protein resides in the secreted. In terms of biological role, could be involved in regulation of growth and intracellular survival. The chain is ESX-1 secretion-associated protein EspJ from Mycobacterium tuberculosis (strain CDC 1551 / Oshkosh).